A 310-amino-acid polypeptide reads, in one-letter code: Vomeronasal type-1 receptor 97 (310 aa).

The Extracellular portion of the chain corresponds to 1–19 (MNKDNILHTDTNIKITLFS). The chain crosses the membrane as a helical span at residues 20–40 (EVSIGISANSALFFSHLFMLF). The Cytoplasmic portion of the chain corresponds to 41 to 49 (EKNRSKPID). Residues 50-70 (LYIAFLSLTQLMLLITIGLIA) form a helical membrane-spanning segment. At 71 to 93 (ADMFMSRGRWDSTTCQSLIYLHR) the chain is on the extracellular side. Cysteines 85 and 172 form a disulfide. Residues 94–114 (LLRGFTLCATCLLNVLWTITL) form a helical membrane-spanning segment. Residues 115 to 131 (SPRSSCLTTFKHKSPHH) are Cytoplasmic-facing. The chain crosses the membrane as a helical span at residues 132–152 (ISGAFLFFCVLYISFGSHLFL). Topologically, residues 153-190 (STIATPNLTSDNFMYVTQSCSFLPMSYSRTSMFSTPMA) are extracellular. Asn-159 carries an N-linked (GlcNAc...) asparagine glycan. Residues 191 to 211 (IREALLIGLIGLSSGYMVAFL) form a helical membrane-spanning segment. Over 212–238 (WRHKNQARHLHSTSLSSKVSPEQRATR) the chain is Cytoplasmic. Residues 239–259 (TIMILMSFFVVLYILENVVFY) form a helical membrane-spanning segment. At 260–269 (SRMTFKDGSM) the chain is on the extracellular side. The helical transmembrane segment at 270-290 (FYCVQIIVSHSYATISPFVFI) threads the bilayer. The Cytoplasmic portion of the chain corresponds to 291–310 (CTEKRIIKLWGSMSSRIVSI).

It belongs to the G-protein coupled receptor 1 family. Expressed in 1-4% of neurons of the vomeronasal organ. Only one pheromone receptor gene may be expressed in a particular neuron. Not expressed in the main olfactory epithelium.

It localises to the cell membrane. Functionally, putative pheromone receptor implicated in the regulation of social as well as reproductive behavior. The sequence is that of Vomeronasal type-1 receptor 97 (Vom1r97) from Rattus norvegicus (Rat).